The primary structure comprises 327 residues: D-alanine--D-alanine ligase (327 aa).

Residues lysine 113–alanine 312 enclose the ATP-grasp domain. Valine 139–threonine 194 lines the ATP pocket. The Mg(2+) site is built by aspartate 266, glutamate 279, and asparagine 281.

The protein belongs to the D-alanine--D-alanine ligase family. Mg(2+) is required as a cofactor. The cofactor is Mn(2+).

The protein localises to the cytoplasm. The catalysed reaction is 2 D-alanine + ATP = D-alanyl-D-alanine + ADP + phosphate + H(+). It functions in the pathway cell wall biogenesis; peptidoglycan biosynthesis. Cell wall formation. This is D-alanine--D-alanine ligase from Cupriavidus pinatubonensis (strain JMP 134 / LMG 1197) (Cupriavidus necator (strain JMP 134)).